The primary structure comprises 479 residues: Aspartyl/glutamyl-tRNA(Asn/Gln) amidotransferase subunit B (479 aa).

It belongs to the GatB/GatE family. GatB subfamily. Heterotrimer of A, B and C subunits.

It carries out the reaction L-glutamyl-tRNA(Gln) + L-glutamine + ATP + H2O = L-glutaminyl-tRNA(Gln) + L-glutamate + ADP + phosphate + H(+). The catalysed reaction is L-aspartyl-tRNA(Asn) + L-glutamine + ATP + H2O = L-asparaginyl-tRNA(Asn) + L-glutamate + ADP + phosphate + 2 H(+). Its function is as follows. Allows the formation of correctly charged Asn-tRNA(Asn) or Gln-tRNA(Gln) through the transamidation of misacylated Asp-tRNA(Asn) or Glu-tRNA(Gln) in organisms which lack either or both of asparaginyl-tRNA or glutaminyl-tRNA synthetases. The reaction takes place in the presence of glutamine and ATP through an activated phospho-Asp-tRNA(Asn) or phospho-Glu-tRNA(Gln). In Mesoplasma florum (strain ATCC 33453 / NBRC 100688 / NCTC 11704 / L1) (Acholeplasma florum), this protein is Aspartyl/glutamyl-tRNA(Asn/Gln) amidotransferase subunit B.